Consider the following 429-residue polypeptide: Histidinol dehydrogenase (429 aa).

Residues Y127, Q188, and N211 each coordinate NAD(+). Substrate-binding residues include S234, Q256, and H259. Residues Q256 and H259 each coordinate Zn(2+). Residues E324 and H325 each act as proton acceptor in the active site. The substrate site is built by H325, D358, E412, and H417. Residue D358 coordinates Zn(2+). H417 is a Zn(2+) binding site.

The protein belongs to the histidinol dehydrogenase family. The cofactor is Zn(2+).

It catalyses the reaction L-histidinol + 2 NAD(+) + H2O = L-histidine + 2 NADH + 3 H(+). It functions in the pathway amino-acid biosynthesis; L-histidine biosynthesis; L-histidine from 5-phospho-alpha-D-ribose 1-diphosphate: step 9/9. Catalyzes the sequential NAD-dependent oxidations of L-histidinol to L-histidinaldehyde and then to L-histidine. The sequence is that of Histidinol dehydrogenase from Bacillus cereus (strain ATCC 14579 / DSM 31 / CCUG 7414 / JCM 2152 / NBRC 15305 / NCIMB 9373 / NCTC 2599 / NRRL B-3711).